Here is a 147-residue protein sequence, read N- to C-terminus: Hemoglobin subunit epsilon-1 (147 aa).

Residues 3 to 147 enclose the Globin domain; sequence HFTAEEKAAI…VATALAHKYH (145 aa). H64 and H93 together coordinate heme b.

It belongs to the globin family. As to quaternary structure, heterotetramer of two epsilon chains and two alpha chains. As to expression, red blood cells.

Its function is as follows. Beta-type chain found in early embryos. The protein is Hemoglobin subunit epsilon-1 (HBE1) of Capra hircus (Goat).